We begin with the raw amino-acid sequence, 311 residues long: Bifunctional protein FolD (311 aa).

Residue 174 to 176 participates in NADP(+) binding; that stretch reads GKG.

This sequence belongs to the tetrahydrofolate dehydrogenase/cyclohydrolase family. As to quaternary structure, homodimer.

It carries out the reaction (6R)-5,10-methylene-5,6,7,8-tetrahydrofolate + NADP(+) = (6R)-5,10-methenyltetrahydrofolate + NADPH. The catalysed reaction is (6R)-5,10-methenyltetrahydrofolate + H2O = (6R)-10-formyltetrahydrofolate + H(+). The protein operates within one-carbon metabolism; tetrahydrofolate interconversion. Functionally, catalyzes the oxidation of 5,10-methylenetetrahydrofolate to 5,10-methenyltetrahydrofolate and then the hydrolysis of 5,10-methenyltetrahydrofolate to 10-formyltetrahydrofolate. The chain is Bifunctional protein FolD from Pyrobaculum arsenaticum (strain DSM 13514 / JCM 11321 / PZ6).